The following is a 361-amino-acid chain: dTDP-glucose 4,6-dehydratase (361 aa).

Residues 11 to 12, 32 to 35, 58 to 59, 80 to 84, and Thr-99 contribute to the NAD(+) site; these read FI, DKLT, DI, and LAAES. Residue Ser-84 coordinates substrate. Thr-133 lines the substrate pocket. Asp-134 acts as the Proton donor in catalysis. Residues Glu-135 and Tyr-167 each act as proton acceptor in the active site. 167-171 serves as a coordination point for NAD(+); that stretch reads YSASK. Residue Asn-196 participates in substrate binding. An NAD(+)-binding site is contributed by Asn-197. Residues 206–207, 222–224, Arg-231, Asn-266, and 296–300 each bind substrate; these read KL, PIY, and DRPGH.

The protein belongs to the NAD(P)-dependent epimerase/dehydratase family. dTDP-glucose dehydratase subfamily. Homodimer. Requires NAD(+) as cofactor.

The catalysed reaction is dTDP-alpha-D-glucose = dTDP-4-dehydro-6-deoxy-alpha-D-glucose + H2O. The protein operates within carbohydrate biosynthesis; dTDP-L-rhamnose biosynthesis. It functions in the pathway bacterial outer membrane biogenesis; LPS O-antigen biosynthesis. Functionally, catalyzes the dehydration of dTDP-D-glucose to form dTDP-6-deoxy-D-xylo-4-hexulose via a three-step process involving oxidation, dehydration and reduction. In Shigella flexneri, this protein is dTDP-glucose 4,6-dehydratase (rfbB).